The chain runs to 623 residues: Arginine decarboxylase 2 (623 aa).

An N6-(pyridoxal phosphate)lysine modification is found at lysine 109. Residue 295–305 coordinates substrate; sequence LDCGGGLGVDY.

It belongs to the Orn/Lys/Arg decarboxylase class-II family. SpeA subfamily. Pyridoxal 5'-phosphate is required as a cofactor. It depends on Mg(2+) as a cofactor. Expressed in stems (at protein level).

It catalyses the reaction L-arginine + H(+) = agmatine + CO2. It participates in amine and polyamine biosynthesis; agmatine biosynthesis; agmatine from L-arginine: step 1/1. This chain is Arginine decarboxylase 2 (ADC2), found in Oryza sativa subsp. japonica (Rice).